We begin with the raw amino-acid sequence, 144 residues long: MSQGRSRGKAKGVEEFRPYVTRALPVGARVTCADNSGAKVLEIIMVQKAKTRVSRLPAAAVGDYVNVVVKKGPAELRKQVHGAVIIRQKYPVRRLNGVRVAFEDNAAVLTTPEGEMKGTDIKGPVAAEASEKWPRLANLASMVV.

Belongs to the universal ribosomal protein uL14 family. As to quaternary structure, part of the 50S ribosomal subunit. Forms a cluster with proteins L3 and L24e, part of which may contact the 16S rRNA in 2 intersubunit bridges.

Its function is as follows. Binds to 23S rRNA. Forms part of two intersubunit bridges in the 70S ribosome. In Cenarchaeum symbiosum (strain A), this protein is Large ribosomal subunit protein uL14.